We begin with the raw amino-acid sequence, 40 residues long: uncharacterized protein (40 aa).

This is an uncharacterized protein from Escherichia coli (Bacteriophage T4).